A 322-amino-acid chain; its full sequence is Atrochrysone carboxyl ACP thioesterase dmxR1 (322 aa).

4 residues coordinate Zn(2+): histidine 105, histidine 107, aspartate 109, and histidine 110. Aspartate 109 (proton donor/acceptor) is an active-site residue.

Belongs to the metallo-beta-lactamase superfamily. The cofactor is Zn(2+).

It carries out the reaction atrochrysone carboxyl-[ACP] + H2O = atrochrysone carboxylate + holo-[ACP] + H(+). The protein operates within secondary metabolite biosynthesis. Its function is as follows. Atrochrysone carboxyl ACP thioesterase; part of the gene cluster that mediates the biosynthesis of the dimeric xanthones cryptosporioptides. The pathway begins with the synthesis of atrochrysone thioester by the polyketide synthase dmx-nrPKS. The atrochrysone carboxyl ACP thioesterase dmxR1 then breaks the thioester bond and releases the atrochrysone carboxylic acid from dmx-nrPKS. Atrochrysone carboxylic acid is decarboxylated by the decarboxylase dmxR15, and oxidized by the anthrone oxygenase dmxR16 to yield emodin. Emodin is then reduced to emodin hydroquinone by the oxidoreductase dmxR7. A-ring reduction by the short chain dehydrogenase dmxR18, dehydration by the scytalone dehydratase-like protein dmxR17 and probable spontaneous re-oxidation, results in overall deoxygenation to chrysophanol. Baeyer-Villiger oxidation by the Baeyer-Villiger monooxygenase (BVMO) dmxR6 then yields monodictylactone in equilibrium with monodictyphenone. In the case of the cryptosporioptides biosynthesis, monodictylactone is reduced at C-12 to an alcohol (by the short chain dehydrogenases dmxR12 or dmxR8) and hydroxylated at C-5 by dmxR9, yielding the electron-rich aromatic which could eliminate H(2)O to form the ortho-quinonemethide, followed by tautomerisation to paraquinone and complete the formal reduction to produce the 10-methylgroup. Conjugate addition of C-4a-OH to the resulting paraquinone by the monooxygenase dmxR10 then gives cyclohexadienone, which is then reduced at C-5 by the short chain dehydrogenase dmxR3 to give the dihydroxanthone. The 6,7-epoxide in the cryptosporioptides could be introduced by the cytochrome P450 monooxygenase dmxL3. The highly reducing PKS dmxL2 manufactures butyrate, which is further carboxylated by dmxL1 to form ethylmalonate. It is not yet clear whether the carboxylation occurs while the butyrate is attached to the ACP of dmxL2, but this unusual fungal metabolite could then be esterified to O-5 by the O-acetyltransferase dmxR13. Finally, dimerization performed by dmxR5 gives the observed dimers cryptosporioptides A, B and C as the final products of the pathway. This chain is Atrochrysone carboxyl ACP thioesterase dmxR1, found in Cryptosporiopsis sp. (strain 8999).